A 261-amino-acid chain; its full sequence is uncharacterized protein (261 aa).

An N-terminal signal peptide occupies residues 1–22; that stretch reads MKSIKRIGLCISLLILIIFVTS. Cysteine 23 carries the N-palmitoyl cysteine lipid modification. Residue cysteine 23 is the site of S-diacylglycerol cysteine attachment.

The protein belongs to the staphylococcal tandem lipoprotein family.

The protein resides in the cell membrane. This is an uncharacterized protein from Staphylococcus aureus (strain USA300).